A 241-amino-acid chain; its full sequence is MAVASKVTVIVVAAGKGKRMGRSYNKQYIMLENKPILYHTLAVFEKHSEINEIILVVASGEEEYCQGQIIKKYGLKKVRKVVAGGSERRNSVKNGLEELEEACEVVLVHDGARPFITKEVITKSIEVAYEEGAVIVAVPVKDTIKRVNEKMEVVETPERQQLWAVQTPQVFRSGILKRAYKEAEDFERVGTDDAVLVEAAGYTVKVVLGIYENIKVTTPEDLIIGQGILNQRKDGEQCEWE.

It belongs to the IspD/TarI cytidylyltransferase family. IspD subfamily.

The catalysed reaction is 2-C-methyl-D-erythritol 4-phosphate + CTP + H(+) = 4-CDP-2-C-methyl-D-erythritol + diphosphate. It participates in isoprenoid biosynthesis; isopentenyl diphosphate biosynthesis via DXP pathway; isopentenyl diphosphate from 1-deoxy-D-xylulose 5-phosphate: step 2/6. In terms of biological role, catalyzes the formation of 4-diphosphocytidyl-2-C-methyl-D-erythritol from CTP and 2-C-methyl-D-erythritol 4-phosphate (MEP). This is 2-C-methyl-D-erythritol 4-phosphate cytidylyltransferase from Alkaliphilus metalliredigens (strain QYMF).